The sequence spans 1012 residues: DNA polymerase catalytic subunit (1012 aa).

It belongs to the DNA polymerase type-B family.

The protein resides in the host nucleus. The enzyme catalyses DNA(n) + a 2'-deoxyribonucleoside 5'-triphosphate = DNA(n+1) + diphosphate. In Human herpesvirus 6A (strain Uganda-1102) (HHV-6 variant A), this protein is DNA polymerase catalytic subunit (U38).